Here is a 201-residue protein sequence, read N- to C-terminus: Proteasome subunit beta 1 (201 aa).

A propeptide (removed in mature form; by autocatalysis) is located at residue M1. T2 (nucleophile) is an active-site residue.

The protein belongs to the peptidase T1B family. As to quaternary structure, the 20S proteasome core is composed of 14 alpha and 14 beta subunits that assemble into four stacked heptameric rings, resulting in a barrel-shaped structure. The two inner rings, each composed of seven catalytic beta subunits, are sandwiched by two outer rings, each composed of seven alpha subunits. The catalytic chamber with the active sites is on the inside of the barrel. Has a gated structure, the ends of the cylinder being occluded by the N-termini of the alpha-subunits. Is capped at one or both ends by the proteasome regulatory ATPase, PAN.

It localises to the cytoplasm. The catalysed reaction is Cleavage of peptide bonds with very broad specificity.. Its activity is regulated as follows. The formation of the proteasomal ATPase PAN-20S proteasome complex, via the docking of the C-termini of PAN into the intersubunit pockets in the alpha-rings, triggers opening of the gate for substrate entry. Interconversion between the open-gate and close-gate conformations leads to a dynamic regulation of the 20S proteasome proteolysis activity. Component of the proteasome core, a large protease complex with broad specificity involved in protein degradation. The chain is Proteasome subunit beta 1 from Pyrobaculum neutrophilum (strain DSM 2338 / JCM 9278 / NBRC 100436 / V24Sta) (Thermoproteus neutrophilus).